Here is a 343-residue protein sequence, read N- to C-terminus: Aspartate carbamoyltransferase catalytic subunit (343 aa).

Carbamoyl phosphate contacts are provided by R91 and T92. K119 serves as a coordination point for L-aspartate. Carbamoyl phosphate contacts are provided by R141, H171, and Q174. Positions 204 and 259 each coordinate L-aspartate. 2 residues coordinate carbamoyl phosphate: G300 and P301.

This sequence belongs to the aspartate/ornithine carbamoyltransferase superfamily. ATCase family. As to quaternary structure, heterododecamer (2C3:3R2) of six catalytic PyrB chains organized as two trimers (C3), and six regulatory PyrI chains organized as three dimers (R2).

The enzyme catalyses carbamoyl phosphate + L-aspartate = N-carbamoyl-L-aspartate + phosphate + H(+). It functions in the pathway pyrimidine metabolism; UMP biosynthesis via de novo pathway; (S)-dihydroorotate from bicarbonate: step 2/3. Catalyzes the condensation of carbamoyl phosphate and aspartate to form carbamoyl aspartate and inorganic phosphate, the committed step in the de novo pyrimidine nucleotide biosynthesis pathway. This chain is Aspartate carbamoyltransferase catalytic subunit, found in Burkholderia multivorans (strain ATCC 17616 / 249).